Consider the following 221-residue polypeptide: Membrane protein 0 (221 aa).

The segment at methionine 1 to glycine 22 is disordered. Positions proline 44–tyrosine 47 match the PPXY motif motif. The helical transmembrane segment at phenylalanine 100–phenylalanine 120 threads the bilayer.

This sequence belongs to the varicellovirus ORF0 protein family. Interacts with host ITCH; this interaction probably mediates ITCH degradation.

The protein resides in the host Golgi apparatus membrane. The chain is Membrane protein 0 from Homo sapiens (Human).